The sequence spans 385 residues: tRNA pseudouridine synthase D (385 aa).

Asp65 acts as the Nucleophile in catalysis. The 203-residue stretch at 143-345 (GCENYFGEQR…SDGVRKAFFK (203 aa)) folds into the TRUD domain.

It belongs to the pseudouridine synthase TruD family.

The catalysed reaction is uridine(13) in tRNA = pseudouridine(13) in tRNA. In terms of biological role, responsible for synthesis of pseudouridine from uracil-13 in transfer RNAs. In Aquifex aeolicus (strain VF5), this protein is tRNA pseudouridine synthase D.